The following is a 256-amino-acid chain: Acetyl-coenzyme A carboxylase carboxyl transferase subunit alpha (256 aa).

One can recognise a CoA carboxyltransferase C-terminal domain in the interval 1 to 236; it reads MTKITRIVRE…KQELLVELEQ (236 aa).

This sequence belongs to the AccA family. Acetyl-CoA carboxylase is a heterohexamer composed of biotin carboxyl carrier protein (AccB), biotin carboxylase (AccC) and two subunits each of ACCase subunit alpha (AccA) and ACCase subunit beta (AccD).

The protein resides in the cytoplasm. It catalyses the reaction N(6)-carboxybiotinyl-L-lysyl-[protein] + acetyl-CoA = N(6)-biotinyl-L-lysyl-[protein] + malonyl-CoA. It participates in lipid metabolism; malonyl-CoA biosynthesis; malonyl-CoA from acetyl-CoA: step 1/1. Its function is as follows. Component of the acetyl coenzyme A carboxylase (ACC) complex. First, biotin carboxylase catalyzes the carboxylation of biotin on its carrier protein (BCCP) and then the CO(2) group is transferred by the carboxyltransferase to acetyl-CoA to form malonyl-CoA. The protein is Acetyl-coenzyme A carboxylase carboxyl transferase subunit alpha of Streptococcus gordonii (strain Challis / ATCC 35105 / BCRC 15272 / CH1 / DL1 / V288).